We begin with the raw amino-acid sequence, 272 residues long: Flagellin (272 aa).

It belongs to the bacterial flagellin family.

It localises to the secreted. The protein resides in the bacterial flagellum. In terms of biological role, flagellin is the subunit protein which polymerizes to form the filaments of bacterial flagella. In Halalkalibacterium halodurans (strain ATCC BAA-125 / DSM 18197 / FERM 7344 / JCM 9153 / C-125) (Bacillus halodurans), this protein is Flagellin (hag).